Here is a 79-residue protein sequence, read N- to C-terminus: Putative antitoxin VapB12 (79 aa).

It belongs to the UPF0330 family.

Possibly the antitoxin component of a type II toxin-antitoxin (TA) system. Its cognate toxin is VapC12 (Potential). The sequence is that of Putative antitoxin VapB12 (vapB12) from Sulfurisphaera tokodaii (strain DSM 16993 / JCM 10545 / NBRC 100140 / 7) (Sulfolobus tokodaii).